Here is a 399-residue protein sequence, read N- to C-terminus: tRNA-specific 2-thiouridylase MnmA (399 aa).

ATP is bound by residues 7 to 14 (AMSGGVDS) and Met-33. Residue Cys-128 is the Nucleophile of the active site. An intrachain disulfide couples Cys-128 to Cys-224. Residue Gly-152 participates in ATP binding. Positions 174-176 (KDQ) are interaction with tRNA. Cys-224 acts as the Cysteine persulfide intermediate in catalysis. The segment at 333–334 (RY) is interaction with tRNA.

It belongs to the MnmA/TRMU family.

It localises to the cytoplasm. The enzyme catalyses S-sulfanyl-L-cysteinyl-[protein] + uridine(34) in tRNA + AH2 + ATP = 2-thiouridine(34) in tRNA + L-cysteinyl-[protein] + A + AMP + diphosphate + H(+). Its function is as follows. Catalyzes the 2-thiolation of uridine at the wobble position (U34) of tRNA, leading to the formation of s(2)U34. The sequence is that of tRNA-specific 2-thiouridylase MnmA from Rhodopirellula baltica (strain DSM 10527 / NCIMB 13988 / SH1).